Consider the following 461-residue polypeptide: Ribulose bisphosphate carboxylase (461 aa).

Asn113 contributes to the substrate binding site. Lys168 (proton acceptor) is an active-site residue. Residue Lys170 participates in substrate binding. Mg(2+) contacts are provided by Lys193, Asp195, and Glu196. N6-carboxylysine is present on Lys193. The active-site Proton acceptor is the His289. Substrate contacts are provided by Arg290, His323, and Ser370.

The protein belongs to the RuBisCO large chain family. Type II subfamily. Homodimer. Mg(2+) is required as a cofactor.

The enzyme catalyses 2 (2R)-3-phosphoglycerate + 2 H(+) = D-ribulose 1,5-bisphosphate + CO2 + H2O. It catalyses the reaction D-ribulose 1,5-bisphosphate + O2 = 2-phosphoglycolate + (2R)-3-phosphoglycerate + 2 H(+). In terms of biological role, ruBisCO catalyzes two reactions: the carboxylation of D-ribulose 1,5-bisphosphate, the primary event in carbon dioxide fixation, as well as the oxidative fragmentation of the pentose substrate. Both reactions occur simultaneously and in competition at the same active site. This Thiomonas intermedia (strain K12) (Thiobacillus intermedius) protein is Ribulose bisphosphate carboxylase.